Here is a 639-residue protein sequence, read N- to C-terminus: Exocyst complex component EXO70E2 (639 aa).

Belongs to the EXO70 family. As to quaternary structure, component of the exocyst complex and of the exocyst-positive organelle (EXPO). Interacts with SEC6, SEC10A and SEC10B. In terms of tissue distribution, expressed in roots, in the root-hair zone, both in root hair and nonhair cells.

It localises to the secreted. Its subcellular location is the extracellular exosome. It is found in the cell membrane. The protein resides in the cytoplasm. The protein localises to the endomembrane system. Functionally, influences the subcellular localization patterns of other exocyst complex proteins (e.g. SEC5A, SEC15A, SEC15B and EXO84B) leading to their recruitment to exocyst, well-defined large punctate structures throughout the cytosol. Essential component for the formation and the recruitment of exocyst subunits to the exocyst-positive organelle (EXPO), a secreted double membrane structure also called extracellular exosome, that acts as a sequester for cytosolic proteins to release them into the apoplast. The polypeptide is Exocyst complex component EXO70E2 (Arabidopsis thaliana (Mouse-ear cress)).